The primary structure comprises 76 residues: Omega-conotoxin-like TxO3 (76 aa).

Positions 1–22 are cleaved as a signal peptide; that stretch reads MKLTCVVIVAVLFLTAWTFVTA. A propeptide spanning residues 23–52 is cleaved from the precursor; it reads VPHSSNALENLYLKAHHEMNNPEASELNKR. 3 disulfide bridges follow: Cys53–Cys67, Cys60–Cys71, and Cys66–Cys75.

It belongs to the conotoxin O1 superfamily. As to expression, expressed by the venom duct.

It localises to the secreted. In terms of biological role, omega-conotoxins act at presynaptic membranes, they bind and block voltage-gated calcium channels (Cav). The sequence is that of Omega-conotoxin-like TxO3 (TXO3) from Conus textile (Cloth-of-gold cone).